A 180-amino-acid polypeptide reads, in one-letter code: Decaprenylphosphoryl-5-phosphoribose phosphatase (180 aa).

4 helical membrane passes run 31-51, 61-81, 116-136, and 139-159; these read ALSH…AGAL, LAVG…KRVV, VLLA…PMAL, and LVLG…GALV.

This sequence belongs to the PA-phosphatase related phosphoesterase family.

The protein localises to the cell membrane. It carries out the reaction trans,octa-cis-decaprenylphospho-beta-D-ribofuranose 5-phosphate + H2O = trans,octa-cis-decaprenylphospho-beta-D-ribofuranose + phosphate. It participates in cell wall biogenesis; cell wall polysaccharide biosynthesis. Phosphatase involved in the biosynthesis of decaprenylphosphoryl arabinose (DPA), which serves as the arabinose donor for the biosynthesis of arabinogalactan, the major mycobacterial cell wall polysaccharide. Catalyzes the dephosphorylation of decaprenylphosphoryl-5-phosphoribose (DPPR) to decaprenyl-phosphoribose (DPR). The polypeptide is Decaprenylphosphoryl-5-phosphoribose phosphatase (Mycolicibacterium smegmatis (strain ATCC 700084 / mc(2)155) (Mycobacterium smegmatis)).